A 217-amino-acid chain; its full sequence is Membrane-associated progesterone receptor component 2 (217 aa).

A glycan (O-linked (Xyl...) (chondroitin sulfate) serine) is linked at serine 15. The chain crosses the membrane as a helical span at residues 40–62 (ALLATGGEMLLNVALVALVLLGA). Residues serine 84, serine 98, and serine 202 each carry the phosphoserine modification. Residues 96 to 195 (DFSLEQLRQY…EKYDYVGRLL (100 aa)) form the Cytochrome b5 heme-binding domain. A disordered region spans residues 196–217 (KPGEEPSEYTDEEDTKDHSKQD). Positions 200-209 (EPSEYTDEED) are enriched in acidic residues. Tyrosine 204 carries the post-translational modification Phosphotyrosine. Threonine 205 is subject to Phosphothreonine.

The protein belongs to the cytochrome b5 family. MAPR subfamily. As to quaternary structure, interacts with PGRMC1. Interacts with AAAS.

Its subcellular location is the membrane. The protein resides in the nucleus envelope. It is found in the endoplasmic reticulum. It localises to the secreted. In terms of biological role, required for the maintenance of uterine histoarchitecture and normal female reproductive lifespan. May serve as a universal non-classical progesterone receptor in the uterus. Intracellular heme chaperone required for delivery of labile, or signaling heme, to the nucleus. Plays a role in adipocyte function and systemic glucose homeostasis. In brown fat, which has a high demand for heme, delivery of labile heme in the nucleus regulates the activity of heme-responsive transcriptional repressors such as NR1D1 and BACH1. The polypeptide is Membrane-associated progesterone receptor component 2 (Rattus norvegicus (Rat)).